The sequence spans 529 residues: MGNGLIYISLEVIVACLISALAMYYVMKKIYYARGQAVLKSASAKAKLMEFQAKSFVEAEEMRMKSQECKLQQQYENKNLQLKAHFDKKEAYLKHLEAQHKEFVRDEKRYLEKEKQELEKERQILEQEKENFKKQYATCKENQSKALDVMLNYMAYTKEEIKSMILKQLEEELEAQKSALIRRYEKEAKEESKKKSYAILAEATARFAGNYAIENFTNRIALPCSEYIGRVIGKDGKNIEAFKKISGVDIEFSEGDKELCLSSFNIFRREVASETLKILIEDGRIQPNRIEEVYHRVVRNMEKELLSEGQSVVLELELGAMEDELKILLGKMRYRSSFGQNALQHSKEVALLAGLIAEQLGGDKKLARRAGILHDIGKALTQELGRDHVSLGVEVCKRNKEDPVVINAIYAHHGHEEIMSIECASVCAADALSAGRPGARRKSDEEYAKRMQALEEIALGFEGVEKAYAMESGRELRVIVKSNQVRDNQVPIIARKIAKKIEESAQYVGEVGVQVVRESRFKTTATLKQ.

Residues 4-24 traverse the membrane as a helical segment; it reads GLIYISLEVIVACLISALAMY. Positions 216 to 297 constitute a KH domain; that stretch reads FTNRIALPCS…NRIEEVYHRV (82 aa). The region spanning 342-435 is the HD domain; that stretch reads ALQHSKEVAL…VCAADALSAG (94 aa).

Belongs to the RNase Y family.

The protein localises to the cell membrane. Endoribonuclease that initiates mRNA decay. The chain is Ribonuclease Y from Helicobacter acinonychis (strain Sheeba).